Reading from the N-terminus, the 215-residue chain is NAD(P)H-quinone oxidoreductase subunit I (215 aa).

4Fe-4S ferredoxin-type domains lie at 55–84 (GRIH…VDWV) and 95–124 (RNYS…MTEE). The [4Fe-4S] cluster site is built by Cys64, Cys67, Cys70, Cys74, Cys104, Cys107, Cys110, and Cys114. Over residues 169–180 (MDPHGVASDRPR) the composition is skewed to basic and acidic residues. The disordered stretch occupies residues 169-215 (MDPHGVASDRPRAGQLPAQVLETLTPPAKPTAKNDGQSSSEAKEGDA).

This sequence belongs to the complex I 23 kDa subunit family. As to quaternary structure, NDH-1 is composed of at least 11 different subunits. The cofactor is [4Fe-4S] cluster.

It localises to the cellular thylakoid membrane. The enzyme catalyses a plastoquinone + NADH + (n+1) H(+)(in) = a plastoquinol + NAD(+) + n H(+)(out). The catalysed reaction is a plastoquinone + NADPH + (n+1) H(+)(in) = a plastoquinol + NADP(+) + n H(+)(out). Functionally, NDH-1 shuttles electrons from an unknown electron donor, via FMN and iron-sulfur (Fe-S) centers, to quinones in the respiratory and/or the photosynthetic chain. The immediate electron acceptor for the enzyme in this species is believed to be plastoquinone. Couples the redox reaction to proton translocation, and thus conserves the redox energy in a proton gradient. In Synechococcus sp. (strain CC9605), this protein is NAD(P)H-quinone oxidoreductase subunit I.